The primary structure comprises 120 residues: Phosphoribosyl-ATP pyrophosphatase (120 aa).

This sequence belongs to the PRA-PH family.

It is found in the cytoplasm. The catalysed reaction is 1-(5-phospho-beta-D-ribosyl)-ATP + H2O = 1-(5-phospho-beta-D-ribosyl)-5'-AMP + diphosphate + H(+). Its pathway is amino-acid biosynthesis; L-histidine biosynthesis; L-histidine from 5-phospho-alpha-D-ribose 1-diphosphate: step 2/9. This Methylibium petroleiphilum (strain ATCC BAA-1232 / LMG 22953 / PM1) protein is Phosphoribosyl-ATP pyrophosphatase.